The following is a 350-amino-acid chain: C5a anaphylatoxin chemotactic receptor 1 (350 aa).

Residues 1 to 37 (MDSFNYTTPDYGHYDDKDTLDLNTPVDKTSNTLRVPD) are Extracellular-facing. An N-linked (GlcNAc...) asparagine glycan is attached at N5. The required for CHIPS binding stretch occupies residues 10–18 (DYGHYDDKD). A sulfotyrosine mark is found at Y11 and Y14. The involved in C5a binding stretch occupies residues 21-30 (DLNTPVDKTS). A helical transmembrane segment spans residues 38–64 (ILALVIFAVVFLVGVLGNALVVWVTAF). The Cytoplasmic portion of the chain corresponds to 65–69 (EAKRT). Residues 70-93 (INAIWFLNLAVADFLSCLALPILF) form a helical membrane-spanning segment. The Extracellular portion of the chain corresponds to 94–110 (TSIVQHHHWPFGGAACS). A disulfide bridge links C109 with C188. Residues 111–132 (ILPSLILLNMYASILLLATISA) traverse the membrane as a helical segment. Topologically, residues 133-153 (DRFLLVFKPIWCQNFRGAGLA) are cytoplasmic. A helical transmembrane segment spans residues 154 to 174 (WIACAVAWGLALLLTIPSFLY). Residues 175–200 (RVVREEYFPPKVLCGVDYSHDKRRER) lie on the Extracellular side of the membrane. Residues 201–226 (AVAIVRLVLGFLWPLLTLTICYTFIL) form a helical membrane-spanning segment. Residues 227–242 (LRTWSRRATRSTKTLK) lie on the Cytoplasmic side of the membrane. A helical transmembrane segment spans residues 243-265 (VVVAVVASFFIFWLPYQVTGIMM). Topologically, residues 266 to 282 (SFLEPSSPTFLLLKKLD) are extracellular. A helical transmembrane segment spans residues 283-303 (SLCVSFAYINCCINPIIYVVA). Residues 304-350 (GQGFQGRLRKSLPSLLRNVLTEESVVRESKSFTRSTVDTMAQKTQAV) are Cytoplasmic-facing. A phosphoserine mark is found at S314, S317, S327, S332, S334, and S338.

This sequence belongs to the G-protein coupled receptor 1 family. As to quaternary structure, homodimer. May also form higher-order oligomers. Interacts (when phosphorylated) with ARRB1 and ARRB2; the interaction is associated with internalization of C5aR. Interacts (via N-terminal domain) with S.aureus chemotaxis inhibitory protein (CHIPS); the interaction blocks the receptor and may thus inhibit the immune response. In terms of processing, sulfation plays a critical role in the association of C5aR with C5a, but no significant role in the ability of the receptor to transduce a signal and mobilize calcium in response to a small a small peptide agonist. Sulfation at Tyr-14 is important for CHIPS binding. Phosphorylated on serine residues in response to C5a binding, resulting in internalization of the receptor and short-term desensitization to the ligand. The key residues involved in this process are Ser-334 and Ser-338.

The protein localises to the cell membrane. It localises to the cytoplasmic vesicle. Receptor for the chemotactic and inflammatory peptide anaphylatoxin C5a. The ligand interacts with at least two sites on the receptor: a high-affinity site on the extracellular N-terminus, and a second site in the transmembrane region which activates downstream signaling events. Receptor activation stimulates chemotaxis, granule enzyme release, intracellular calcium release and superoxide anion production. This Homo sapiens (Human) protein is C5a anaphylatoxin chemotactic receptor 1 (C5AR1).